The primary structure comprises 551 residues: Glucose-6-phosphate isomerase (551 aa).

The Proton donor role is filled by glutamate 352. Active-site residues include histidine 383 and lysine 511.

The protein belongs to the GPI family.

It is found in the cytoplasm. It carries out the reaction alpha-D-glucose 6-phosphate = beta-D-fructose 6-phosphate. It participates in carbohydrate biosynthesis; gluconeogenesis. Its pathway is carbohydrate degradation; glycolysis; D-glyceraldehyde 3-phosphate and glycerone phosphate from D-glucose: step 2/4. Catalyzes the reversible isomerization of glucose-6-phosphate to fructose-6-phosphate. The protein is Glucose-6-phosphate isomerase of Chlorobium luteolum (strain DSM 273 / BCRC 81028 / 2530) (Pelodictyon luteolum).